Reading from the N-terminus, the 582-residue chain is Trans-ocimene synthase, chloroplastic (582 aa).

The transit peptide at 1-35 (MSLIIQSLPHWSRIPPRPPQLSQFQNSSRPKPLIQ) directs the protein to the chloroplast. Residues arginine 296, aspartate 333, aspartate 337, arginine 474, and aspartate 477 each contribute to the (2E)-geranyl diphosphate site. Residues aspartate 333 and aspartate 337 each coordinate Mg(2+). Positions 333–337 (DDIYD) match the DDXXD motif motif. 3 residues coordinate Mg(2+): aspartate 477, threonine 481, and glutamate 485.

The protein belongs to the terpene synthase family. Tpsb subfamily. As to quaternary structure, monomer. Mg(2+) serves as cofactor. It depends on Mn(2+) as a cofactor. Expressed in male and female leaves. Barely detectable in fruits and shoots.

Its subcellular location is the plastid. The protein resides in the chloroplast. The catalysed reaction is (2E)-geranyl diphosphate = (E)-beta-ocimene + diphosphate. Its pathway is secondary metabolite biosynthesis; terpenoid biosynthesis. Monoterpene synthase (TPS) involved in the biosynthesis of monoterpene natural products used by traditional Chinese medicine to treat headache, inflammation and intoxication. Catalyzes the conversion of (2E)-geranyl diphosphate (GPP) into (E)-beta-ocimene. The chain is Trans-ocimene synthase, chloroplastic from Litsea cubeba (Aromatic litsea).